The primary structure comprises 712 residues: Potassium transporter 1 (712 aa).

The Cytoplasmic segment spans residues 1–19 (MNQSPSLIEQGISQQHLKT). A helical transmembrane segment spans residues 20-40 (LSCANVLTLAYQSLGVIYGDL). Topologically, residues 41-67 (STSPLYVYKTTFSGKLSLHEDDEEIFG) are extracellular. A helical membrane pass occupies residues 68-88 (VFSFIFWTFTLIALFKYVFIV). Residues 89 to 154 (LSADDNGEGG…FFEKHPKSQK (66 aa)) lie on the Cytoplasmic side of the membrane. The helical transmembrane segment at 155–175 (CLLLFVLLGTCMAIGDSVLTP) threads the bilayer. Residues 176–189 (TISVLSAVSGVKLK) are Extracellular-facing. A helical transmembrane segment spans residues 190–210 (IPNLHENYVVIIACIILVAIF). Residues 211 to 219 (SVQRYGTHR) lie on the Cytoplasmic side of the membrane. The chain crosses the membrane as a helical span at residues 220–240 (VAFIFAPISTAWLLSISSIGV). At 241 to 267 (YNTIKWNPRIVSALSPVYMYKFLRSTG) the chain is on the extracellular side. The chain crosses the membrane as a helical span at residues 268-288 (VEGWVSLGGVVLSITGVETMF). Residues 289-300 (ADLGHFSSLSIK) lie on the Cytoplasmic side of the membrane. The chain crosses the membrane as a helical span at residues 301–321 (VAFSFFVYPCLILAYMGEAAF). Topologically, residues 322-340 (LSKHHEDIQQSFYKAIPEP) are extracellular. A helical membrane pass occupies residues 341–361 (VFWPVFIVATFAAVVGSQAVI). At 362-392 (SATFSIISQCCALDCFPRVKIIHTSSKIHGQ) the chain is on the cytoplasmic side. Residues 393–413 (IYIPEVNWMLMCLCLAVTIGL) form a helical membrane-spanning segment. Residues 414 to 424 (RDTNMMGHAYG) are Extracellular-facing. A helical membrane pass occupies residues 425–445 (LAVTSVMLVTTCLMTLVMTIV). Residues 446-449 (WKQR) are Cytoplasmic-facing. The helical transmembrane segment at 450-470 (IITVLAFVVFFGSIELLYFSS) threads the bilayer. Topologically, residues 471–474 (CVYK) are extracellular. A helical transmembrane segment spans residues 475–495 (VPEGGWIPILLSLTFMAVMYI). The Cytoplasmic segment spans residues 496–712 (WNYGTTKKHE…LLEVGMVYYV (217 aa)).

Belongs to the HAK/KUP transporter (TC 2.A.72.3) family. As to expression, detected in the whole mature plant but preferentially expressed in roots and stems, and in potassium-starved plants.

It localises to the cell membrane. In terms of biological role, high-affinity potassium transporter that could play a major role in the uptake of potassium from the rhizosphere. May act as a low-affinity potassium transporter under high potassium concentrations. Could also transport rubidium. This chain is Potassium transporter 1 (POT1), found in Arabidopsis thaliana (Mouse-ear cress).